The primary structure comprises 635 residues: MVSIRLPDGSVRQYEHPVTVAEVAASIGPGLAKAALGGKLDGELVDTSTVIDRDAALAIITDKDADGLDIIRHSTAHLLAYAVKELYPDAQVTIGPVIDNGFYYDFSYNRPFTPEDLEKIEKRMQEIAKKDEPVTRRVVSRDEAAGYFRSIGEKYKAEIIESIPQTDEIKLYSHGGFTDLCRGPHVPSTGKLKVFKLMKVAGAYWRGDSKNEQLQRIYGTAWTKKEDQDQYLHMLEEAEKRDHRKLGKQLDLFHMQEESPGMVFWHPKGWALWQQVEQYMRRRVNDAGYLEIKTPMIMDRSLWEASGHWQNYRENMFTTESEKRDYAIKPMNCPGHVQVFKHGLRSYRDLPLRYAEFGSCHRNEASGALHGLMRVRGFVQDDAHIFCTEEQFIAESIAFNTLAMSVYKDFGFEHIDIKLSLRPEQRAGTDETWDRAEQGLRDALTACGLSWEELPGEGAFYGPKIEYHIKDALGRSWQCGTLQLDMVLPERLGAEYVAEDNSRRRPVMLHRAIVGSMERFLGILIEHHAGAMPAWLAPFQAVVLNIAESQVEYAHSLTQTLQKQGVRVAGDLRNEKISYKIREHTLEKVPYLLVVGDKERDAQTVAVRARGGVDLGVMPIEAFVERLQEDLRSFK.

The 61-residue stretch at 1 to 61 (MVSIRLPDGS…DRDAALAIIT (61 aa)) folds into the TGS domain. The tract at residues 242–533 (DHRKLGKQLD…LIEHHAGAMP (292 aa)) is catalytic. Zn(2+) is bound by residues Cys333, His384, and His510.

Belongs to the class-II aminoacyl-tRNA synthetase family. Homodimer. Zn(2+) serves as cofactor.

The protein localises to the cytoplasm. The catalysed reaction is tRNA(Thr) + L-threonine + ATP = L-threonyl-tRNA(Thr) + AMP + diphosphate + H(+). Catalyzes the attachment of threonine to tRNA(Thr) in a two-step reaction: L-threonine is first activated by ATP to form Thr-AMP and then transferred to the acceptor end of tRNA(Thr). Also edits incorrectly charged L-seryl-tRNA(Thr). This is Threonine--tRNA ligase from Burkholderia ambifaria (strain ATCC BAA-244 / DSM 16087 / CCUG 44356 / LMG 19182 / AMMD) (Burkholderia cepacia (strain AMMD)).